The primary structure comprises 781 residues: Arf-GAP with coiled-coil, ANK repeat and PH domain-containing protein 2 (781 aa).

Positions 1–226 constitute a BAR domain; that stretch reads MKVTVDFEEC…MKDLGAQLDQ (226 aa). Positions 266–361 constitute a PH domain; sequence GIVMEGYLFK…WIKAVQTSIA (96 aa). A compositionally biased stretch (basic and acidic residues) spans 365 to 378; that stretch reads REKGDESEKQEKKS. The interval 365–390 is disordered; sequence REKGDESEKQEKKSSPSTGSLESGSE. Low complexity predominate over residues 379–388; the sequence is SPSTGSLESG. Residues 399 to 521 form the Arf-GAP domain; the sequence is ESALQRVQCI…KFVEKQPAAA (123 aa). A C4-type zinc finger spans residues 414-437; sequence CCDCGLADPRWASINLGITLCIEC. The segment at 520–576 is disordered; it reads AAVSPLESRTKVLPQSQEEKRHSAPEKSFLAIEQGAASPRVRSSDSGIQQSVDDSRE. ANK repeat units lie at residues 642–671, 675–704, and 708–737; these read NKAT…NVNI, KGRG…NQHA, and DGKD…NEEM.

It localises to the endosome membrane. It is found in the cell membrane. Its activity is regulated as follows. GAP activity stimulated by phosphatidylinositol 4,5-bisphosphate (PIP2) and phosphatidic acid. Its function is as follows. GTPase-activating protein (GAP) for ADP ribosylation factor 6 (ARF6). This chain is Arf-GAP with coiled-coil, ANK repeat and PH domain-containing protein 2 (ACAP2), found in Gallus gallus (Chicken).